A 122-amino-acid chain; its full sequence is Small ribosomal subunit protein uS13 (122 aa).

A disordered region spans residues arginine 99–lysine 122.

The protein belongs to the universal ribosomal protein uS13 family. Part of the 30S ribosomal subunit. Forms a loose heterodimer with protein S19. Forms two bridges to the 50S subunit in the 70S ribosome.

Located at the top of the head of the 30S subunit, it contacts several helices of the 16S rRNA. In the 70S ribosome it contacts the 23S rRNA (bridge B1a) and protein L5 of the 50S subunit (bridge B1b), connecting the 2 subunits; these bridges are implicated in subunit movement. Contacts the tRNAs in the A and P-sites. This chain is Small ribosomal subunit protein uS13, found in Cereibacter sphaeroides (strain ATCC 17029 / ATH 2.4.9) (Rhodobacter sphaeroides).